We begin with the raw amino-acid sequence, 475 residues long: 23S rRNA (uracil(1939)-C(5))-methyltransferase RlmD (475 aa).

Residues 1 to 76 (MHRGDKPVNI…SRFSKAKVRE (76 aa)) form the TRAM domain. [4Fe-4S] cluster is bound by residues Cys-89, Cys-95, Cys-98, and Cys-178. Residues Gln-299, Phe-328, Asn-333, Glu-349, Asp-377, and Asp-398 each contribute to the S-adenosyl-L-methionine site. The active-site Nucleophile is Cys-431.

This sequence belongs to the class I-like SAM-binding methyltransferase superfamily. RNA M5U methyltransferase family. RlmD subfamily.

It carries out the reaction uridine(1939) in 23S rRNA + S-adenosyl-L-methionine = 5-methyluridine(1939) in 23S rRNA + S-adenosyl-L-homocysteine + H(+). In terms of biological role, catalyzes the formation of 5-methyl-uridine at position 1939 (m5U1939) in 23S rRNA. This chain is 23S rRNA (uracil(1939)-C(5))-methyltransferase RlmD, found in Polynucleobacter necessarius subsp. necessarius (strain STIR1).